The primary structure comprises 207 residues: Alpha-1-acid glycoprotein 1 (207 aa).

A signal peptide spans 1-18 (MALHMILVMLSLLPLLEA). Q19 carries the post-translational modification Pyrrolidone carboxylic acid. N-linked (GlcNAc...) asparagine glycosylation is found at N25, N34, N76, N94, and N104. A disulfide bond links C91 and C184.

This sequence belongs to the calycin superfamily. Lipocalin family. As to expression, expressed by the liver and secreted in plasma.

Its subcellular location is the secreted. Functionally, functions as a transport protein in the blood stream. Binds various ligands in the interior of its beta-barrel domain. Appears to function in modulating the activity of the immune system during the acute-phase reaction. The chain is Alpha-1-acid glycoprotein 1 (Orm1) from Mus caroli (Ryukyu mouse).